Reading from the N-terminus, the 109-residue chain is Nucleoid-associated protein swp_1717 (109 aa).

The interval 88-109 (QKDKMAEVTGGMQLPPGMKMPF) is disordered.

Belongs to the YbaB/EbfC family. In terms of assembly, homodimer.

The protein localises to the cytoplasm. Its subcellular location is the nucleoid. Functionally, binds to DNA and alters its conformation. May be involved in regulation of gene expression, nucleoid organization and DNA protection. The chain is Nucleoid-associated protein swp_1717 from Shewanella piezotolerans (strain WP3 / JCM 13877).